Consider the following 347-residue polypeptide: Zinc-type alcohol dehydrogenase-like protein C16A3.02c (347 aa).

Belongs to the zinc-containing alcohol dehydrogenase family. Quinone oxidoreductase subfamily.

The protein resides in the golgi apparatus. Its subcellular location is the endoplasmic reticulum. The sequence is that of Zinc-type alcohol dehydrogenase-like protein C16A3.02c from Schizosaccharomyces pombe (strain 972 / ATCC 24843) (Fission yeast).